Reading from the N-terminus, the 240-residue chain is ATP synthase subunit a 1 (240 aa).

A run of 5 helical transmembrane segments spans residues 23-43 (GQVLITSWIVIGILVIVSVLA), 82-102 (VPFIGTLFLFIFVSNWSGALF), 120-140 (DINTTVALALCTSFVYFYAGF), 186-206 (LVVAVLVLLVPLIVPLPVMLL), and 207-227 (GLFTSGIQALVFATLAGAYIH).

The protein belongs to the ATPase A chain family. In terms of assembly, F-type ATPases have 2 components, CF(1) - the catalytic core - and CF(0) - the membrane proton channel. CF(1) has five subunits: alpha(3), beta(3), gamma(1), delta(1), epsilon(1). CF(0) has four main subunits: a, b, b' and c.

It is found in the cellular thylakoid membrane. Its function is as follows. Key component of the proton channel; it plays a direct role in the translocation of protons across the membrane. The chain is ATP synthase subunit a 1 from Acaryochloris marina (strain MBIC 11017).